A 603-amino-acid chain; its full sequence is Probable HECT-type ubiquitin ligase-interacting protein creD (603 aa).

Disordered regions lie at residues 375–398 and 432–499; these read ELDPNGYRTPGPGSGPGTPFGTLS and LNIT…MATP. Basic and acidic residues predominate over residues 443–455; it reads TDHESQNDSEHRR. Over residues 465-481 the composition is skewed to low complexity; it reads PSSGSNSHSPSSPVLSR. Basic and acidic residues predominate over residues 482-492; the sequence is RPSDEVDHEHV.

The protein belongs to the arrestin family. As to quaternary structure, interacts with hulA.

Component of the regulatory network controlling carbon source utilization through ubiquitination and deubiquitination involving creA, creB, creC, creD and acrB. May be involved in signaling by recognizing appropriately phosphorylated substrates via its arrestin domains and then recruit a HECT-type ubiquitin ligase such as hulA, leading to ubiquitination of the substrate, providing a link between ubiquitination and phosphorylation in protein regulation and stability. This is Probable HECT-type ubiquitin ligase-interacting protein creD (creD) from Aspergillus flavus (strain ATCC 200026 / FGSC A1120 / IAM 13836 / NRRL 3357 / JCM 12722 / SRRC 167).